The chain runs to 241 residues: Octanoyltransferase (241 aa).

One can recognise a BPL/LPL catalytic domain in the interval 50-238 (KIAHEQVWLL…AFEQIFGPTI (189 aa)). Residues 89–96 (RGGEFTYH), 169–171 (AIG), and 182–184 (GIS) contribute to the substrate site. Residue C200 is the Acyl-thioester intermediate of the active site.

The protein belongs to the LipB family.

The protein resides in the cytoplasm. It carries out the reaction octanoyl-[ACP] + L-lysyl-[protein] = N(6)-octanoyl-L-lysyl-[protein] + holo-[ACP] + H(+). The protein operates within protein modification; protein lipoylation via endogenous pathway; protein N(6)-(lipoyl)lysine from octanoyl-[acyl-carrier-protein]: step 1/2. Its function is as follows. Catalyzes the transfer of endogenously produced octanoic acid from octanoyl-acyl-carrier-protein onto the lipoyl domains of lipoate-dependent enzymes. Lipoyl-ACP can also act as a substrate although octanoyl-ACP is likely to be the physiological substrate. The chain is Octanoyltransferase from Bartonella bacilliformis (strain ATCC 35685 / KC583 / Herrer 020/F12,63).